The sequence spans 499 residues: Probable cytosol aminopeptidase (499 aa).

The Mn(2+) site is built by lysine 263 and aspartate 268. The active site involves lysine 275. Mn(2+) contacts are provided by aspartate 286, aspartate 345, and glutamate 347. Arginine 349 is an active-site residue.

Belongs to the peptidase M17 family. Mn(2+) is required as a cofactor.

Its subcellular location is the cytoplasm. It catalyses the reaction Release of an N-terminal amino acid, Xaa-|-Yaa-, in which Xaa is preferably Leu, but may be other amino acids including Pro although not Arg or Lys, and Yaa may be Pro. Amino acid amides and methyl esters are also readily hydrolyzed, but rates on arylamides are exceedingly low.. The catalysed reaction is Release of an N-terminal amino acid, preferentially leucine, but not glutamic or aspartic acids.. Its function is as follows. Presumably involved in the processing and regular turnover of intracellular proteins. Catalyzes the removal of unsubstituted N-terminal amino acids from various peptides. The polypeptide is Probable cytosol aminopeptidase (Chlamydia trachomatis serovar L2 (strain ATCC VR-902B / DSM 19102 / 434/Bu)).